Here is a 505-residue protein sequence, read N- to C-terminus: Maturase K (505 aa).

Belongs to the intron maturase 2 family. MatK subfamily.

Its subcellular location is the plastid. The protein localises to the chloroplast. In terms of biological role, usually encoded in the trnK tRNA gene intron. Probably assists in splicing its own and other chloroplast group II introns. The polypeptide is Maturase K (Amaranthus greggii (Gregg's amaranth)).